Here is an 818-residue protein sequence, read N- to C-terminus: Probable helicase MAGATAMA 3 (818 aa).

Positions 259–559 constitute a UvrD-like helicase ATP-binding domain; sequence NKSQKEAIDV…KMLKTQYRMH (301 aa). Residue 280-287 participates in ATP binding; the sequence is GPPGTGKT. Acidic residues-rich tracts occupy residues 781–790 and 798–818; these read PDAPLYEDES and GDDDFGDGDADQDDVAMAGED. The segment at 781–818 is disordered; that stretch reads PDAPLYEDESLPVAPYGGDDDFGDGDADQDDVAMAGED.

Belongs to the helicase family. In terms of tissue distribution, expressed in flowers, siliques, leaves, roots and shoot apex.

The protein resides in the nucleus. In terms of biological role, probable helicase that may regulate RNA molecules involved in nucleolar organization and pollen tube guidance. The protein is Probable helicase MAGATAMA 3 (MAA3) of Arabidopsis thaliana (Mouse-ear cress).